The primary structure comprises 258 residues: L-aspartate dehydrogenase 1 (258 aa).

Ala-121 and Asn-181 together coordinate NAD(+). Residue His-211 is part of the active site.

This sequence belongs to the L-aspartate dehydrogenase family.

The catalysed reaction is L-aspartate + NADP(+) + H2O = oxaloacetate + NH4(+) + NADPH + H(+). It catalyses the reaction L-aspartate + NAD(+) + H2O = oxaloacetate + NH4(+) + NADH + H(+). The protein operates within cofactor biosynthesis; NAD(+) biosynthesis; iminoaspartate from L-aspartate (dehydrogenase route): step 1/1. In terms of biological role, specifically catalyzes the NAD or NADP-dependent dehydrogenation of L-aspartate to iminoaspartate. The polypeptide is L-aspartate dehydrogenase 1 (Bordetella bronchiseptica (strain ATCC BAA-588 / NCTC 13252 / RB50) (Alcaligenes bronchisepticus)).